A 307-amino-acid polypeptide reads, in one-letter code: Small ribosomal subunit biogenesis GTPase RsgA (307 aa).

A CP-type G domain is found at 64–229 (KNSLIRPSIA…IADTPGFSSL (166 aa)). GTP-binding positions include 113-116 (SKLD) and 172-180 (GQTGAGKTT). Zn(2+) is bound by residues C253, C258, H260, and C266.

Belongs to the TRAFAC class YlqF/YawG GTPase family. RsgA subfamily. Monomer. Associates with 30S ribosomal subunit, binds 16S rRNA. It depends on Zn(2+) as a cofactor.

It is found in the cytoplasm. In terms of biological role, one of several proteins that assist in the late maturation steps of the functional core of the 30S ribosomal subunit. Helps release RbfA from mature subunits. May play a role in the assembly of ribosomal proteins into the subunit. Circularly permuted GTPase that catalyzes slow GTP hydrolysis, GTPase activity is stimulated by the 30S ribosomal subunit. In Lactococcus lactis subsp. lactis (strain IL1403) (Streptococcus lactis), this protein is Small ribosomal subunit biogenesis GTPase RsgA.